The primary structure comprises 608 residues: Albumin (608 aa).

The signal sequence occupies residues 1–18 (MKWVTFLLLLFISGSAFS). Residues 19–24 (RGVFRR) constitute a propeptide that is removed on maturation. Albumin domains are found at residues 19 to 211 (RGVF…AVKE), 212 to 403 (KALV…EFQP), and 404 to 601 (LVEE…NLVA). Cu cation is bound at residue H27. S29 carries the post-translational modification Phosphoserine. Positions 30 and 37 each coordinate Ca(2+). Residues C77 and C86 are joined by a disulfide bond. At S89 the chain carries Phosphoserine. H91 provides a ligand contact to Zn(2+). 6 cysteine pairs are disulfide-bonded: C99/C115, C114/C125, C148/C193, C192/C201, C224/C270, and C269/C277. Ca(2+) is bound at residue E268. Residues H271 and D273 each coordinate Zn(2+). The Ca(2+) site is built by D273, E276, and D279. Intrachain disulfides connect C289–C303, C302–C313, C340–C385, C384–C393, C416–C462, C461–C472, C485–C501, and C500–C511. A Phosphoserine modification is found at S297. S443 carries the post-translational modification Phosphoserine. 2 positions are modified to phosphothreonine: T444 and T446. K460 carries the post-translational modification N6-succinyllysine. The residue at position 513 (S513) is a Phosphoserine. Intrachain disulfides connect C538/C583 and C582/C591. K543 is subject to N6-succinyllysine. Position 558 is an N6-methyllysine (K558). The residue at position 570 (T570) is a Phosphothreonine. Position 588 is an N6-succinyllysine (K588).

This sequence belongs to the ALB/AFP/VDB family. Interacts with FCGRT; this interaction regulates ALB homeostasis. Interacts with TASOR. In plasma, occurs in a covalently-linked complex with chromophore-bound alpha-1-microglobulin; this interaction does not prevent fatty acid binding to ALB. Phosphorylated by FAM20C in the extracellular medium. Plasma.

Its subcellular location is the secreted. In terms of biological role, binds water, Ca(2+), Na(+), K(+), fatty acids, hormones, bilirubin and drugs. Its main function is the regulation of the colloidal osmotic pressure of blood. Major zinc transporter in plasma, typically binds about 80% of all plasma zinc. Major calcium and magnesium transporter in plasma, binds approximately 45% of circulating calcium and magnesium in plasma. Potentially has more than two calcium-binding sites and might additionally bind calcium in a non-specific manner. The shared binding site between zinc and calcium at residue Asp-273 suggests a crosstalk between zinc and calcium transport in the blood. The rank order of affinity is zinc &gt; calcium &gt; magnesium. Binds to the bacterial siderophore enterobactin and inhibits enterobactin-mediated iron uptake of E.coli from ferric transferrin, and may thereby limit the utilization of iron and growth of enteric bacteria such as E.coli. Does not prevent iron uptake by the bacterial siderophore aerobactin. The protein is Albumin (Alb) of Rattus norvegicus (Rat).